A 338-amino-acid chain; its full sequence is Heat-inducible transcription repressor HrcA (338 aa).

It belongs to the HrcA family.

Negative regulator of class I heat shock genes (grpE-dnaK-dnaJ and groELS operons). Prevents heat-shock induction of these operons. The protein is Heat-inducible transcription repressor HrcA of Thermotoga sp. (strain RQ2).